The sequence spans 326 residues: Malate dehydrogenase (326 aa).

An NAD(+)-binding site is contributed by 11-17 (GAAGQIG). The substrate site is built by R92 and R98. NAD(+) contacts are provided by residues N105, Q112, and 129-131 (VGN). Substrate-binding residues include N131 and R162. H187 functions as the Proton acceptor in the catalytic mechanism.

The protein belongs to the LDH/MDH superfamily. MDH type 2 family.

The enzyme catalyses (S)-malate + NAD(+) = oxaloacetate + NADH + H(+). In terms of biological role, catalyzes the reversible oxidation of malate to oxaloacetate. In Alkalilimnicola ehrlichii (strain ATCC BAA-1101 / DSM 17681 / MLHE-1), this protein is Malate dehydrogenase.